A 392-amino-acid chain; its full sequence is Probable tRNA sulfurtransferase (392 aa).

The THUMP domain maps to 59–166; the sequence is SCYREALKRV…DEGLFIYTTE (108 aa). ATP contacts are provided by residues 186–187, 211–212, Arg-269, Gly-290, and Gln-299; these read LL and YF.

The protein belongs to the ThiI family.

The protein localises to the cytoplasm. It carries out the reaction [ThiI sulfur-carrier protein]-S-sulfanyl-L-cysteine + a uridine in tRNA + 2 reduced [2Fe-2S]-[ferredoxin] + ATP + H(+) = [ThiI sulfur-carrier protein]-L-cysteine + a 4-thiouridine in tRNA + 2 oxidized [2Fe-2S]-[ferredoxin] + AMP + diphosphate. It catalyses the reaction [ThiS sulfur-carrier protein]-C-terminal Gly-Gly-AMP + S-sulfanyl-L-cysteinyl-[cysteine desulfurase] + AH2 = [ThiS sulfur-carrier protein]-C-terminal-Gly-aminoethanethioate + L-cysteinyl-[cysteine desulfurase] + A + AMP + 2 H(+). It functions in the pathway cofactor biosynthesis; thiamine diphosphate biosynthesis. Its function is as follows. Catalyzes the ATP-dependent transfer of a sulfur to tRNA to produce 4-thiouridine in position 8 of tRNAs, which functions as a near-UV photosensor. Also catalyzes the transfer of sulfur to the sulfur carrier protein ThiS, forming ThiS-thiocarboxylate. This is a step in the synthesis of thiazole, in the thiamine biosynthesis pathway. The sulfur is donated as persulfide by IscS. The sequence is that of Probable tRNA sulfurtransferase from Coxiella burnetii (strain RSA 493 / Nine Mile phase I).